Reading from the N-terminus, the 115-residue chain is Large ribosomal subunit protein bL19 (115 aa).

It belongs to the bacterial ribosomal protein bL19 family.

In terms of biological role, this protein is located at the 30S-50S ribosomal subunit interface and may play a role in the structure and function of the aminoacyl-tRNA binding site. The protein is Large ribosomal subunit protein bL19 of Streptococcus pyogenes serotype M2 (strain MGAS10270).